A 399-amino-acid chain; its full sequence is tRNA-specific 2-thiouridylase MnmA (399 aa).

Residues 18–25 (AMSGGVDS) and L44 each bind ATP. C112 (nucleophile) is an active-site residue. Residues C112 and C213 are joined by a disulfide bond. G136 is a binding site for ATP. The interval 163–165 (RDQ) is interaction with tRNA. C213 acts as the Cysteine persulfide intermediate in catalysis.

The protein belongs to the MnmA/TRMU family.

It is found in the cytoplasm. The catalysed reaction is S-sulfanyl-L-cysteinyl-[protein] + uridine(34) in tRNA + AH2 + ATP = 2-thiouridine(34) in tRNA + L-cysteinyl-[protein] + A + AMP + diphosphate + H(+). Catalyzes the 2-thiolation of uridine at the wobble position (U34) of tRNA, leading to the formation of s(2)U34. The sequence is that of tRNA-specific 2-thiouridylase MnmA from Rhizobium leguminosarum bv. trifolii (strain WSM2304).